The chain runs to 238 residues: Zinc import ATP-binding protein ZnuC (238 aa).

One can recognise an ABC transporter domain in the interval 5–220 (IQLNNISVNF…SEFIAIFGNI (216 aa)). ATP is bound at residue 37–44 (GPNGAGKS).

The protein belongs to the ABC transporter superfamily. Zinc importer (TC 3.A.1.15.5) family. The complex is composed of two ATP-binding proteins (ZnuC), two transmembrane proteins (ZnuB) and a solute-binding protein (ZnuA).

The protein localises to the cell membrane. It carries out the reaction Zn(2+)(out) + ATP(in) + H2O(in) = Zn(2+)(in) + ADP(in) + phosphate(in) + H(+)(in). In terms of biological role, part of the ABC transporter complex ZnuABC involved in zinc import. Responsible for energy coupling to the transport system. The polypeptide is Zinc import ATP-binding protein ZnuC (Buchnera aphidicola subsp. Baizongia pistaciae (strain Bp)).